Consider the following 262-residue polypeptide: Glutamate racemase (262 aa).

Residues 5 to 6 and 37 to 38 contribute to the substrate site; these read DS and YG. Residue cysteine 69 is the Proton donor/acceptor of the active site. 70 to 71 contacts substrate; the sequence is NT. Residue cysteine 181 is the Proton donor/acceptor of the active site. 182–183 lines the substrate pocket; it reads TH.

It belongs to the aspartate/glutamate racemases family.

The catalysed reaction is L-glutamate = D-glutamate. It participates in cell wall biogenesis; peptidoglycan biosynthesis. Functionally, provides the (R)-glutamate required for cell wall biosynthesis. The sequence is that of Glutamate racemase from Buchnera aphidicola subsp. Acyrthosiphon pisum (strain Tuc7).